A 475-amino-acid chain; its full sequence is Sulfate adenylyltransferase subunit 1 (475 aa).

The tr-type G domain maps to lysine 25 to arginine 239. The G1 stretch occupies residues glycine 34 to serine 41. Glycine 34–serine 41 serves as a coordination point for GTP. The tract at residues glycine 92 to aspartate 96 is G2. The tract at residues aspartate 113–glycine 116 is G3. GTP is bound by residues aspartate 113–histidine 117 and asparagine 168–aspartate 171. Residues asparagine 168 to aspartate 171 are G4. The G5 stretch occupies residues serine 206–leucine 208.

The protein belongs to the TRAFAC class translation factor GTPase superfamily. Classic translation factor GTPase family. CysN/NodQ subfamily. As to quaternary structure, heterodimer composed of CysD, the smaller subunit, and CysN.

The enzyme catalyses sulfate + ATP + H(+) = adenosine 5'-phosphosulfate + diphosphate. Its pathway is sulfur metabolism; hydrogen sulfide biosynthesis; sulfite from sulfate: step 1/3. With CysD forms the ATP sulfurylase (ATPS) that catalyzes the adenylation of sulfate producing adenosine 5'-phosphosulfate (APS) and diphosphate, the first enzymatic step in sulfur assimilation pathway. APS synthesis involves the formation of a high-energy phosphoric-sulfuric acid anhydride bond driven by GTP hydrolysis by CysN coupled to ATP hydrolysis by CysD. The polypeptide is Sulfate adenylyltransferase subunit 1 (Escherichia coli (strain SE11)).